The sequence spans 71 residues: Large ribosomal subunit protein uL29 (71 aa).

This sequence belongs to the universal ribosomal protein uL29 family.

This Rickettsia akari (strain Hartford) protein is Large ribosomal subunit protein uL29.